The sequence spans 834 residues: Serine/threonine-protein kinase ATG1 (834 aa).

Positions 1–27 (MIPQSNPTAQRRSGDAQNTNNVAPNSV) are disordered. In terms of domain architecture, Protein kinase spans 58 to 354 (YKIGPEIGKG…FNEFFNDSLI (297 aa)). ATP contacts are provided by residues 64–72 (IGKGSFATV) and K87. D204 (proton acceptor) is an active-site residue. 2 disordered regions span residues 394-417 (EQKKNDSVVRSPSPTTATTATPRQ) and 483-532 (ADAI…ERRI). The segment covering 401 to 416 (VVRSPSPTTATTATPR) has biased composition (low complexity). Residues 495-511 (VDQTNRLASSQQQTETA) are compositionally biased toward polar residues. Residues 513–525 (YRRSSSSGSQKRP) are compositionally biased toward low complexity.

This sequence belongs to the protein kinase superfamily. Ser/Thr protein kinase family. APG1/unc-51/ULK1 subfamily. Homodimer. Forms a ternary complex with ATG13 and ATG17.

It localises to the cytoplasm. It is found in the preautophagosomal structure membrane. It catalyses the reaction L-seryl-[protein] + ATP = O-phospho-L-seryl-[protein] + ADP + H(+). It carries out the reaction L-threonyl-[protein] + ATP = O-phospho-L-threonyl-[protein] + ADP + H(+). Its function is as follows. Serine/threonine protein kinase involved in the cytoplasm to vacuole transport (Cvt) and found to be essential in autophagy, where it is required for the formation of autophagosomes. Involved in the clearance of protein aggregates which cannot be efficiently cleared by the proteasome. Required for selective autophagic degradation of the nucleus (nucleophagy) as well as for mitophagy which contributes to regulate mitochondrial quantity and quality by eliminating the mitochondria to a basal level to fulfill cellular energy requirements and preventing excess ROS production. Also involved in endoplasmic reticulum-specific autophagic process, in selective removal of ER-associated degradation (ERAD) substrates. Plays a key role in ATG9 and ATG23 cycling through the pre-autophagosomal structure and is necessary to promote ATG18 binding to ATG9 through phosphorylation of ATG9. Catalyzes phosphorylation of ATG4, decreasing the interaction between ATG4 and ATG8 and impairing deconjugation of PE-conjugated forms of ATG8. The chain is Serine/threonine-protein kinase ATG1 (ATG1) from Candida albicans (strain SC5314 / ATCC MYA-2876) (Yeast).